A 231-amino-acid chain; its full sequence is Large ribosomal subunit protein uL1 (231 aa).

This sequence belongs to the universal ribosomal protein uL1 family. As to quaternary structure, part of the 50S ribosomal subunit.

Functionally, binds directly to 23S rRNA. The L1 stalk is quite mobile in the ribosome, and is involved in E site tRNA release. In terms of biological role, protein L1 is also a translational repressor protein, it controls the translation of the L11 operon by binding to its mRNA. The sequence is that of Large ribosomal subunit protein uL1 from Halorhodospira halophila (strain DSM 244 / SL1) (Ectothiorhodospira halophila (strain DSM 244 / SL1)).